The sequence spans 486 residues: Glutamate--tRNA ligase 1 (486 aa).

Residues P9–G19 carry the 'HIGH' region motif. The 'KMSKS' region motif lies at K259–R263. Residue K262 coordinates ATP.

The protein belongs to the class-I aminoacyl-tRNA synthetase family. Glutamate--tRNA ligase type 1 subfamily. As to quaternary structure, monomer.

It is found in the cytoplasm. The enzyme catalyses tRNA(Glu) + L-glutamate + ATP = L-glutamyl-tRNA(Glu) + AMP + diphosphate. Catalyzes the attachment of glutamate to tRNA(Glu) in a two-step reaction: glutamate is first activated by ATP to form Glu-AMP and then transferred to the acceptor end of tRNA(Glu). This Hyphomonas neptunium (strain ATCC 15444) protein is Glutamate--tRNA ligase 1.